We begin with the raw amino-acid sequence, 378 residues long: Myoglobin (378 aa).

His332 is a heme binding site.

It belongs to the indoleamine 2,3-dioxygenase family. As to quaternary structure, homodimer. It depends on heme as a cofactor.

Functionally, serves a reserve supply of oxygen and facilitates the movement of oxygen within muscles. The protein is Myoglobin of Haliotis madaka (Giant abalone).